The primary structure comprises 212 residues: Leucyl/phenylalanyl-tRNA--protein transferase (212 aa).

Belongs to the L/F-transferase family.

It is found in the cytoplasm. It catalyses the reaction N-terminal L-lysyl-[protein] + L-leucyl-tRNA(Leu) = N-terminal L-leucyl-L-lysyl-[protein] + tRNA(Leu) + H(+). The enzyme catalyses N-terminal L-arginyl-[protein] + L-leucyl-tRNA(Leu) = N-terminal L-leucyl-L-arginyl-[protein] + tRNA(Leu) + H(+). The catalysed reaction is L-phenylalanyl-tRNA(Phe) + an N-terminal L-alpha-aminoacyl-[protein] = an N-terminal L-phenylalanyl-L-alpha-aminoacyl-[protein] + tRNA(Phe). In terms of biological role, functions in the N-end rule pathway of protein degradation where it conjugates Leu, Phe and, less efficiently, Met from aminoacyl-tRNAs to the N-termini of proteins containing an N-terminal arginine or lysine. This chain is Leucyl/phenylalanyl-tRNA--protein transferase, found in Flavobacterium johnsoniae (strain ATCC 17061 / DSM 2064 / JCM 8514 / BCRC 14874 / CCUG 350202 / NBRC 14942 / NCIMB 11054 / UW101) (Cytophaga johnsonae).